Reading from the N-terminus, the 157-residue chain is MIVLGIDPALGKLGWAVVAKESTKLHYLASGTIKTHSKDEIHNRLAFINSILEKVILEYQPNIAAIEETFVNTNNVTSLKLGYARGAIMSLIGRYNLDMQEFKPNTVKKTVTGYGHAGKEQILYMIKHLISGTDLITNSDEADAVALAYTCLVAKKY.

Catalysis depends on residues Asp-7, Glu-67, and Asp-140. Mg(2+) contacts are provided by Asp-7, Glu-67, and Asp-140.

This sequence belongs to the RuvC family. As to quaternary structure, homodimer which binds Holliday junction (HJ) DNA. The HJ becomes 2-fold symmetrical on binding to RuvC with unstacked arms; it has a different conformation from HJ DNA in complex with RuvA. In the full resolvosome a probable DNA-RuvA(4)-RuvB(12)-RuvC(2) complex forms which resolves the HJ. Mg(2+) serves as cofactor.

It is found in the cytoplasm. It carries out the reaction Endonucleolytic cleavage at a junction such as a reciprocal single-stranded crossover between two homologous DNA duplexes (Holliday junction).. Functionally, the RuvA-RuvB-RuvC complex processes Holliday junction (HJ) DNA during genetic recombination and DNA repair. Endonuclease that resolves HJ intermediates. Cleaves cruciform DNA by making single-stranded nicks across the HJ at symmetrical positions within the homologous arms, yielding a 5'-phosphate and a 3'-hydroxyl group; requires a central core of homology in the junction. The consensus cleavage sequence is 5'-(A/T)TT(C/G)-3'. Cleavage occurs on the 3'-side of the TT dinucleotide at the point of strand exchange. HJ branch migration catalyzed by RuvA-RuvB allows RuvC to scan DNA until it finds its consensus sequence, where it cleaves and resolves the cruciform DNA. This chain is Crossover junction endodeoxyribonuclease RuvC, found in Rickettsia prowazekii (strain Madrid E).